The following is a 181-amino-acid chain: ATP-dependent protease subunit HslV (181 aa).

Thr-7 is a catalytic residue. Na(+) contacts are provided by Ala-166, Cys-169, and Thr-172.

Belongs to the peptidase T1B family. HslV subfamily. In terms of assembly, a double ring-shaped homohexamer of HslV is capped on each side by a ring-shaped HslU homohexamer. The assembly of the HslU/HslV complex is dependent on binding of ATP.

It is found in the cytoplasm. The catalysed reaction is ATP-dependent cleavage of peptide bonds with broad specificity.. With respect to regulation, allosterically activated by HslU binding. In terms of biological role, protease subunit of a proteasome-like degradation complex believed to be a general protein degrading machinery. In Anaeromyxobacter dehalogenans (strain 2CP-C), this protein is ATP-dependent protease subunit HslV.